We begin with the raw amino-acid sequence, 30 residues long: Trypsin inhibitor 2 (30 aa).

Cystine bridges form between Cys2–Cys19, Cys9–Cys21, and Cys15–Cys27.

The protein belongs to the protease inhibitor I7 (squash-type serine protease inhibitor) family.

Its subcellular location is the secreted. Functionally, inhibits trypsin. In Ecballium elaterium (Squirting cucumber), this protein is Trypsin inhibitor 2.